The primary structure comprises 209 residues: Thiamine-phosphate synthase (209 aa).

4-amino-2-methyl-5-(diphosphooxymethyl)pyrimidine contacts are provided by residues 35–39 and asparagine 67; that span reads QLRNK. Residues aspartate 68 and aspartate 87 each contribute to the Mg(2+) site. Serine 106 lines the 4-amino-2-methyl-5-(diphosphooxymethyl)pyrimidine pocket. 132-134 contributes to the 2-[(2R,5Z)-2-carboxy-4-methylthiazol-5(2H)-ylidene]ethyl phosphate binding site; sequence TGS. Residue lysine 135 participates in 4-amino-2-methyl-5-(diphosphooxymethyl)pyrimidine binding. 2-[(2R,5Z)-2-carboxy-4-methylthiazol-5(2H)-ylidene]ethyl phosphate-binding positions include glycine 163 and 183–184; that span reads IS.

It belongs to the thiamine-phosphate synthase family. The cofactor is Mg(2+).

The catalysed reaction is 2-[(2R,5Z)-2-carboxy-4-methylthiazol-5(2H)-ylidene]ethyl phosphate + 4-amino-2-methyl-5-(diphosphooxymethyl)pyrimidine + 2 H(+) = thiamine phosphate + CO2 + diphosphate. It catalyses the reaction 2-(2-carboxy-4-methylthiazol-5-yl)ethyl phosphate + 4-amino-2-methyl-5-(diphosphooxymethyl)pyrimidine + 2 H(+) = thiamine phosphate + CO2 + diphosphate. It carries out the reaction 4-methyl-5-(2-phosphooxyethyl)-thiazole + 4-amino-2-methyl-5-(diphosphooxymethyl)pyrimidine + H(+) = thiamine phosphate + diphosphate. Its pathway is cofactor biosynthesis; thiamine diphosphate biosynthesis; thiamine phosphate from 4-amino-2-methyl-5-diphosphomethylpyrimidine and 4-methyl-5-(2-phosphoethyl)-thiazole: step 1/1. Functionally, condenses 4-methyl-5-(beta-hydroxyethyl)thiazole monophosphate (THZ-P) and 2-methyl-4-amino-5-hydroxymethyl pyrimidine pyrophosphate (HMP-PP) to form thiamine monophosphate (TMP). The protein is Thiamine-phosphate synthase of Chlorobium phaeovibrioides (strain DSM 265 / 1930) (Prosthecochloris vibrioformis (strain DSM 265)).